A 715-amino-acid polypeptide reads, in one-letter code: Protein naked cuticle homolog (715 aa).

Residues 18–53 enclose the EF-hand domain; that stretch reads KKPQPLQFSFTLYDLDGHGKITKDDIAGIVSTIYES. A disordered region spans residues 256-282; that stretch reads SRAKRKVVRKSRSSRKASKLTDDFSRP. A compositionally biased stretch (basic residues) spans 257-273; the sequence is RAKRKVVRKSRSSRKAS. The segment at 305–334 is required for nuclear localization and inhibition of Wnt signaling; it reads ECWKSSLCRRELIEIIRDSMVKNSLCFQPN. The tract at residues 639–690 is disordered; the sequence is ELHQSVQQQQGTHQQQQQPQSSVSSPTHHHHHHAGASLLGENSGSSASAAST. 2 stretches are compositionally biased toward low complexity: residues 642–664 and 673–690; these read QSVQ…VSSP and GASL…AAST.

This sequence belongs to the NKD family.

The protein localises to the cell membrane. It is found in the cytoplasm. It localises to the nucleus. In terms of biological role, cell autonomous antagonist of the canonical Wnt signaling pathway. May activate a second Wnt signaling pathway that controls planar cell polarity. Required for neuroblast specification. This Aedes aegypti (Yellowfever mosquito) protein is Protein naked cuticle homolog.